The following is a 478-amino-acid chain: Cysteine protease ATG4B (478 aa).

The span at 1 to 15 (MTSLPDRGVSSSSSD) shows a compositional bias: polar residues. The segment at 1 to 31 (MTSLPDRGVSSSSSDPLCEGNIAPCSSSSEQ) is disordered. Cys-164 (nucleophile) is an active-site residue. Residues Asp-361 and His-363 contribute to the active site.

It belongs to the peptidase C54 family. In terms of assembly, interacts with ATG8.

It is found in the cytoplasm. The enzyme catalyses [protein]-C-terminal L-amino acid-glycyl-phosphatidylethanolamide + H2O = [protein]-C-terminal L-amino acid-glycine + a 1,2-diacyl-sn-glycero-3-phosphoethanolamine. In terms of biological role, cysteine protease that plays a key role in autophagy by mediating both proteolytic activation and delipidation of ATG8 family proteins. The protease activity is required for proteolytic activation of ATG8 family proteins: cleaves the C-terminal amino acid of ATG8 proteins to reveal a C-terminal glycine. Exposure of the glycine at the C-terminus is essential for ATG8 proteins conjugation to phosphatidylethanolamine (PE) and insertion to membranes, which is necessary for autophagy. In addition to the protease activity, also mediates delipidation of PE-conjugated ATG8 proteins. This Oryza sativa subsp. japonica (Rice) protein is Cysteine protease ATG4B (ATG4B).